The chain runs to 252 residues: Small ribosomal subunit protein eS4 (252 aa).

In terms of domain architecture, S4 RNA-binding spans 43–105 (FPLLIIVRDI…TGETYRVIPV (63 aa)).

Belongs to the eukaryotic ribosomal protein eS4 family.

The sequence is that of Small ribosomal subunit protein eS4 from Staphylothermus marinus (strain ATCC 43588 / DSM 3639 / JCM 9404 / F1).